The primary structure comprises 364 residues: Fructose-bisphosphate aldolase A (364 aa).

Tyr-5 carries the phosphotyrosine modification. A Phosphothreonine modification is found at Thr-9. A phosphoserine mark is found at Ser-36 and Ser-39. The residue at position 42 (Lys-42) is an N6-acetyllysine; alternate. Residue Lys-42 forms a Glycyl lysine isopeptide (Lys-Gly) (interchain with G-Cter in SUMO1); alternate linkage. A Glycyl lysine isopeptide (Lys-Gly) (interchain with G-Cter in SUMO2); alternate cross-link involves residue Lys-42. Arg-43 contacts beta-D-fructose 1,6-bisphosphate. Ser-46 is modified (phosphoserine). Lys-99 is modified (N6-(2-hydroxyisobutyryl)lysine). Residue Lys-108 is modified to N6-acetyllysine. Lys-111 carries the post-translational modification N6-acetyllysine; alternate. N6-malonyllysine; alternate is present on Lys-111. Position 132 is a phosphoserine (Ser-132). Position 147 is an N6-(2-hydroxyisobutyryl)lysine (Lys-147). The active-site Proton acceptor is the Glu-188. Residue Lys-230 is the Schiff-base intermediate with dihydroxyacetone-P of the active site. Ser-272 is modified (phosphoserine). Residues 272–274 (SGG), Ser-301, and Arg-304 contribute to the beta-D-fructose 1,6-bisphosphate site. Lys-312 carries the post-translational modification N6-malonyllysine. Lys-330 is subject to N6-acetyllysine.

The protein belongs to the class I fructose-bisphosphate aldolase family. As to quaternary structure, homotetramer. Interacts with SNX9 and WAS. Interacts with FBP2; the interaction blocks FBP2 inhibition by physiological concentrations of AMP and reduces inhibition by Ca(2+). Expressed in muscle, brain and hepatoma cells.

Its subcellular location is the cytoplasm. It localises to the myofibril. It is found in the sarcomere. The protein resides in the i band. The protein localises to the m line. It carries out the reaction beta-D-fructose 1,6-bisphosphate = D-glyceraldehyde 3-phosphate + dihydroxyacetone phosphate. The protein operates within carbohydrate degradation; glycolysis; D-glyceraldehyde 3-phosphate and glycerone phosphate from D-glucose: step 4/4. Its function is as follows. Catalyzes the reversible conversion of beta-D-fructose 1,6-bisphosphate (FBP) into two triose phosphate and plays a key role in glycolysis and gluconeogenesis. In addition, may also function as scaffolding protein. The polypeptide is Fructose-bisphosphate aldolase A (Aldoa) (Rattus norvegicus (Rat)).